The following is a 1122-amino-acid chain: Receptor-type guanylate cyclase gcy-5 (1122 aa).

An N-terminal signal peptide occupies residues 1 to 19 (MRLLYFSMVLLWVLGASEC). The Extracellular portion of the chain corresponds to 20–486 (QVIPSSRRTL…CPVQFWDQYG (467 aa)). Residues N252, N299, N344, N350, N378, N434, and N439 are each glycosylated (N-linked (GlcNAc...) asparagine). A helical transmembrane segment spans residues 487–507 (VLIFVASIVLIFLICIMLMCF). At 508 to 1122 (GFMIRGRRAE…KSKMDTLKVV (615 aa)) the chain is on the cytoplasmic side. The segment at 536–562 (QKEKRKPNSRRSLQSGPSTITGESKMT) is disordered. Residues 542 to 830 (PNSRRSLQSG…NTNLMDHVFN (289 aa)) form the Protein kinase domain. Positions 545-559 (RRSLQSGPSTITGES) are enriched in polar residues. Residues 888–1018 (TVLFSDVVKF…DTVNTASRME (131 aa)) form the Guanylate cyclase domain. The interval 1071–1122 (SDTKSLSTRTTPPITDENWPPQMKEDLKKRAVTPYPERQRSGKSKMDTLKVV) is disordered. A compositionally biased stretch (polar residues) spans 1074–1083 (KSLSTRTTPP). The segment covering 1107–1122 (ERQRSGKSKMDTLKVV) has biased composition (basic and acidic residues).

Belongs to the adenylyl cyclase class-4/guanylyl cyclase family. As to expression, expressed in both ASEL and ASER neurons during early embryonic stages and becomes specifically expressed in ASER neuron in early larval stage.

It is found in the cell membrane. The enzyme catalyses GTP = 3',5'-cyclic GMP + diphosphate. Guanylate cyclase involved in the production of the second messenger cGMP. Unlike other guanylate cyclases expressed in ASE neurons, may not play a role in chemotaxis responses to salt ions mediated by ASE sensory neurons. The chain is Receptor-type guanylate cyclase gcy-5 from Caenorhabditis elegans.